A 458-amino-acid polypeptide reads, in one-letter code: tRNA(Ile)-lysidine synthase (458 aa).

35-40 (SGGVDS) contributes to the ATP binding site.

It belongs to the tRNA(Ile)-lysidine synthase family.

It localises to the cytoplasm. The catalysed reaction is cytidine(34) in tRNA(Ile2) + L-lysine + ATP = lysidine(34) in tRNA(Ile2) + AMP + diphosphate + H(+). Its function is as follows. Ligates lysine onto the cytidine present at position 34 of the AUA codon-specific tRNA(Ile) that contains the anticodon CAU, in an ATP-dependent manner. Cytidine is converted to lysidine, thus changing the amino acid specificity of the tRNA from methionine to isoleucine. The polypeptide is tRNA(Ile)-lysidine synthase (Nitrosomonas europaea (strain ATCC 19718 / CIP 103999 / KCTC 2705 / NBRC 14298)).